A 228-amino-acid chain; its full sequence is MRELNELKHLAIIMDGNGRWAQERGKQRVRGHEKGAETIREITMFCSKSDISFLTLYAFSTENWKRPKTEVDFLMRLLSDYLKKEAEVYLKNNIRFKAIGDLSRFSSRLLDEIETLTQKSASCSGLTQVLALNYGSKDEIIRATQKMIEAGVEVSEENLSRFLDTAFAPDVDMLVRTGGDYRLSNYLLWQSSYAELFFTPTLWPDFTAGELAIQIEEFKRRKRRFGGI.

Residue Asp-15 is part of the active site. Asp-15 lines the Mg(2+) pocket. Residues 16–19, Trp-20, Arg-28, His-32, and 60–62 each bind substrate; these read GNGR and STE. Asn-63 (proton acceptor) is an active-site residue. Substrate is bound by residues Trp-64, Arg-66, Arg-176, and 182–184; that span reads RLS. Glu-195 provides a ligand contact to Mg(2+).

Belongs to the UPP synthase family. Homodimer. It depends on Mg(2+) as a cofactor.

Catalyzes the condensation of isopentenyl diphosphate (IPP) with allylic pyrophosphates generating different type of terpenoids. The chain is Isoprenyl transferase from Wolinella succinogenes (strain ATCC 29543 / DSM 1740 / CCUG 13145 / JCM 31913 / LMG 7466 / NCTC 11488 / FDC 602W) (Vibrio succinogenes).